Consider the following 1325-residue polypeptide: Zinc finger MYM-type protein 6 (1325 aa).

8 MYM-type zinc fingers span residues 113–151 (QLFC…PKDV), 163–206 (KDFC…RFEV), 213–248 (HGLC…SSGP), 296–334 (ELFC…QYHL), 342–443 (YSFC…KPEL), 451–485 (FLFC…KETV), 492–531 (KPFC…LVEN), and 538–572 (EEFC…SESI). Residue Ser-397 is modified to Phosphoserine. The interval 665–733 (ESTQEDAMKF…NDAELDSPPS (69 aa)) is disordered. Polar residues predominate over residues 695–706 (PVTQTKATSCKP).

Expressed at high levels in heart, skeletal muscle, kidney and liver.

The protein localises to the nucleus. In terms of biological role, plays a role in the regulation of cell morphology and cytoskeletal organization. In Homo sapiens (Human), this protein is Zinc finger MYM-type protein 6 (ZMYM6).